The chain runs to 81 residues: Putative membrane protein insertion efficiency factor (81 aa).

A disordered region spans residues 61–81 (NDGGFDPVPPAPSSRTSSIAE).

It belongs to the UPF0161 family.

The protein resides in the cell inner membrane. Its function is as follows. Could be involved in insertion of integral membrane proteins into the membrane. In Pseudomonas entomophila (strain L48), this protein is Putative membrane protein insertion efficiency factor.